Reading from the N-terminus, the 353-residue chain is Photosystem II D2 protein (353 aa).

Residues 41–61 traverse the membrane as a helical segment; it reads TAYLALGGWLTGTTFVTSWYT. His118 provides a ligand contact to chlorophyll a. The helical transmembrane segment at 125–141 threads the bilayer; sequence GFMLRQFEISRLVGIRP. Pheophytin a-binding residues include Gln130 and Asn143. A helical transmembrane segment spans residues 153–166; it reads VFVSVFLMYPLGQS. Residue His198 participates in chlorophyll a binding. A helical transmembrane segment spans residues 208-228; it reads GALLCAIHGATVENTLYEDGE. A plastoquinone is bound by residues His215 and Phe262. Residue His215 coordinates Fe cation. His269 lines the Fe cation pocket. Residues 279–295 form a helical membrane-spanning segment; sequence GLWTSSIGIIGLALNLR.

Belongs to the reaction center PufL/M/PsbA/D family. PSII is composed of 1 copy each of membrane proteins PsbA, PsbB, PsbC, PsbD, PsbE, PsbF, PsbH, PsbI, PsbJ, PsbK, PsbL, PsbM, PsbT, PsbX, PsbY, PsbZ, Psb30/Ycf12, peripheral proteins PsbO, CyanoQ (PsbQ), PsbU, PsbV and a large number of cofactors. It forms dimeric complexes. The cofactor is The D1/D2 heterodimer binds P680, chlorophylls that are the primary electron donor of PSII, and subsequent electron acceptors. It shares a non-heme iron and each subunit binds pheophytin, quinone, additional chlorophylls, carotenoids and lipids. There is also a Cl(-1) ion associated with D1 and D2, which is required for oxygen evolution. The PSII complex binds additional chlorophylls, carotenoids and specific lipids..

The protein localises to the host cellular thylakoid membrane. The catalysed reaction is 2 a plastoquinone + 4 hnu + 2 H2O = 2 a plastoquinol + O2. Functionally, photosystem II (PSII) is a light-driven water:plastoquinone oxidoreductase that uses light energy to abstract electrons from H(2)O, generating O(2) and a proton gradient subsequently used for ATP formation. It consists of a core antenna complex that captures photons, and an electron transfer chain that converts photonic excitation into a charge separation. The D1/D2 (PsbA/PsbD) reaction center heterodimer binds P680, the primary electron donor of PSII as well as several subsequent electron acceptors. D2 is needed for assembly of a stable PSII complex. The protein is Photosystem II D2 protein (psbD) of Synechococcus phage S-PM2.